The primary structure comprises 240 residues: Probable transcriptional regulatory protein HPAG1_0159 (240 aa).

Belongs to the TACO1 family.

It is found in the cytoplasm. The sequence is that of Probable transcriptional regulatory protein HPAG1_0159 from Helicobacter pylori (strain HPAG1).